The primary structure comprises 90 residues: Large ribosomal subunit protein bL27 (90 aa).

Belongs to the bacterial ribosomal protein bL27 family.

The polypeptide is Large ribosomal subunit protein bL27 (Paracoccus denitrificans (strain Pd 1222)).